The primary structure comprises 898 residues: Neutral alpha-glucosidase C (898 aa).

Residues 154-173 are disordered; the sequence is QRATKGNGQNTPAATSQENQ. The segment covering 157–171 has biased composition (polar residues); the sequence is TKGNGQNTPAATSQE. The Nucleophile role is filled by D495. E498 is an active-site residue. Catalysis depends on D571, which acts as the Proton donor.

The protein belongs to the glycosyl hydrolase 31 family.

It carries out the reaction Hydrolysis of terminal, non-reducing (1-&gt;4)-linked alpha-D-glucose residues with release of alpha-D-glucose.. In terms of biological role, has alpha-glucosidase activity. This chain is Neutral alpha-glucosidase C (Ganc), found in Mus musculus (Mouse).